We begin with the raw amino-acid sequence, 520 residues long: F-box/LRR-repeat protein At3g59200 (520 aa).

Residues 6 to 54 (RDRISSLPNPVVSHILSFLPTKEAASTSVLSKKWRYLFAYVTNLDFDDS) form the F-box domain. LRR repeat units follow at residues 170 to 197 (CVDVQERGFGFVKLLSGCPVLEELVLMN), 219 to 244 (FCEETYENPKSVSFDTPNLVYLEYSD), and 340 to 365 (NSEIRWDSLPGLLKNCPNLETLVLKR).

The protein is F-box/LRR-repeat protein At3g59200 of Arabidopsis thaliana (Mouse-ear cress).